Consider the following 489-residue polypeptide: Para-nitrobenzyl esterase (489 aa).

Serine 189 functions as the Acyl-ester intermediate in the catalytic mechanism. Serine 189 is subject to Phosphoserine. Active-site charge relay system residues include glutamate 310 and histidine 399.

The protein belongs to the type-B carboxylesterase/lipase family. Monomer.

Functionally, catalyzes hydrolysis of several beta-lactam antibiotic PNB esters to the corresponding free acid and PNB alcohol. The sequence is that of Para-nitrobenzyl esterase (pnbA) from Bacillus subtilis (strain 168).